Consider the following 221-residue polypeptide: Endo-1,4-beta-xylanase 11A (221 aa).

A signal peptide spans 1–17 (MVSFTTLLTAVATAVSA). The region spanning 28 to 218 (RGIQPGTGVH…SSGSAEIEVR (191 aa)) is the GH11 domain. Asparagine 89 carries N-linked (GlcNAc...) asparagine glycosylation. Glutamate 113 serves as the catalytic Nucleophile. Glutamate 205 acts as the Proton donor in catalysis.

Belongs to the glycosyl hydrolase 11 (cellulase G) family.

Its subcellular location is the secreted. It carries out the reaction Endohydrolysis of (1-&gt;4)-beta-D-xylosidic linkages in xylans.. It functions in the pathway glycan degradation; xylan degradation. Its activity is regulated as follows. Retains an activity of 52.5% in the presence of 5 mM SDS. Its function is as follows. Endo-1,4-beta-xylanase involved in the hydrolysis of xylan, a major structural heterogeneous polysaccharide found in plant biomass representing the second most abundant polysaccharide in the biosphere, after cellulose. Is an alkali-tolerant enzyme, exhibiting 50.6% of activity at pH 9.0, and 26.9% even at pH 10.0. This is Endo-1,4-beta-xylanase 11A from Humicola insolens (Soft-rot fungus).